A 399-amino-acid chain; its full sequence is PCI domain-containing protein 2 (399 aa).

Ala2 is modified (N-acetylalanine). At Ser45 the chain carries Phosphoserine. The PCI domain occupies 210–391; that stretch reads ITYKYYVGRK…QKLVVSKQNP (182 aa).

This sequence belongs to the CSN12 family. As to quaternary structure, component of the nuclear pore complex (NPC)-associated TREX-2 complex (transcription and export complex 2), composed of at least GANP, 2 copies of ENY2, PCID2, SEM1/DSS1, and either centrin CETN2 or centrin CETN3. The TREX-2 complex also associates with ALYREF/ALY and with the nucleoporin NUP153. Interacts with BRCA2. Interacts with SRCAP chromatin remodeling complex component ZNHIT1; the interaction results in inhibition of SRCAP complex activity, preventing the deposition of histone variant H2AZ1/H2A.Z to lymphoid fate regulator genes and restricting lymphoid lineage commitment. Highly expressed in bone marrow and haematopoietic progenitor cells but is almost undetectable in mature blood cells.

It is found in the cytoplasm. The protein localises to the nucleus. The protein resides in the nuclear pore complex. In terms of biological role, required for B-cell survival through the regulation of the expression of cell-cycle checkpoint MAD2L1 protein during B cell differentiation. As a component of the TREX-2 complex, involved in the export of mRNAs to the cytoplasm through the nuclear pores. Binds and stabilizes BRCA2 and is thus involved in the control of R-loop-associated DNA damage and transcription-associated genomic instability. Blocks the activity of the SRCAP chromatin remodeling complex by interacting with SRCAP complex member ZNHIT1 and inhibiting its interaction with the complex. This prevents the deposition of histone variant H2AZ1/H2A.Z at the nucleosomes of key lymphoid fate regulator genes which suppresses their expression and restricts lymphoid lineage commitment. In Mus musculus (Mouse), this protein is PCI domain-containing protein 2 (Pcid2).